The sequence spans 660 residues: UvrABC system protein B (660 aa).

Residues 26 to 413 form the Helicase ATP-binding domain; it reads AGINEGKKHQ…TPEMVEQIIR (388 aa). Position 39–46 (39–46) interacts with ATP; sequence GATGTGKT. The Beta-hairpin motif lies at 92-115; the sequence is YYDYYQPEAYVPQSDTYIEKDASI. The Helicase C-terminal domain maps to 430–592; that stretch reads QIDDLIGEIN…ITPKTIEKRI (163 aa). The region spanning 624 to 659 is the UVR domain; the sequence is EAVIERMEAEMKEAAKTLNFERAAELRDLILELKAE.

Belongs to the UvrB family. Forms a heterotetramer with UvrA during the search for lesions. Interacts with UvrC in an incision complex.

It is found in the cytoplasm. The UvrABC repair system catalyzes the recognition and processing of DNA lesions. A damage recognition complex composed of 2 UvrA and 2 UvrB subunits scans DNA for abnormalities. Upon binding of the UvrA(2)B(2) complex to a putative damaged site, the DNA wraps around one UvrB monomer. DNA wrap is dependent on ATP binding by UvrB and probably causes local melting of the DNA helix, facilitating insertion of UvrB beta-hairpin between the DNA strands. Then UvrB probes one DNA strand for the presence of a lesion. If a lesion is found the UvrA subunits dissociate and the UvrB-DNA preincision complex is formed. This complex is subsequently bound by UvrC and the second UvrB is released. If no lesion is found, the DNA wraps around the other UvrB subunit that will check the other stand for damage. The chain is UvrABC system protein B from Halalkalibacterium halodurans (strain ATCC BAA-125 / DSM 18197 / FERM 7344 / JCM 9153 / C-125) (Bacillus halodurans).